The chain runs to 121 residues: Small ribosomal subunit protein uS13 (121 aa).

Residues 95-121 (GLPVRGQKTKTNARTRKGKRKTVGAKS) form a disordered region.

It belongs to the universal ribosomal protein uS13 family. Part of the 30S ribosomal subunit. Forms a loose heterodimer with protein S19. Forms two bridges to the 50S subunit in the 70S ribosome.

Its function is as follows. Located at the top of the head of the 30S subunit, it contacts several helices of the 16S rRNA. In the 70S ribosome it contacts the 23S rRNA (bridge B1a) and protein L5 of the 50S subunit (bridge B1b), connecting the 2 subunits; these bridges are implicated in subunit movement. Contacts the tRNAs in the A and P-sites. The sequence is that of Small ribosomal subunit protein uS13 from Campylobacter jejuni subsp. jejuni serotype O:23/36 (strain 81-176).